A 1275-amino-acid polypeptide reads, in one-letter code: Serine/threonine-protein kinase ULK4 (1275 aa).

One can recognise a Protein kinase domain in the interval 4 to 280; the sequence is FILYEEIGRG…WTRLLQHSFW (277 aa). Disordered regions lie at residues 299 to 350 and 364 to 392; these read SRNT…KSTL and RPTP…TSPL. Residues 336-348 show a composition bias toward basic and acidic residues; it reads FRLENPTEFRPKS. Polar residues predominate over residues 364 to 373; the sequence is RPTPRTSTAV. 5 HEAT repeats span residues 842–880, 926–964, 1025–1063, 1151–1189, and 1213–1253; these read LKLC…ILSH, STVV…LLVN, LVEE…NLVA, NRPL…LYGG, and PKEQ…LAPG.

Belongs to the protein kinase superfamily. Ser/Thr protein kinase family. APG1/unc-51/ULK1 subfamily. In terms of tissue distribution, expressed in the brain, mainly in postmitotic neurons, including GABAergic neurons, but not in astrocytes (at protein level).

The enzyme catalyses L-seryl-[protein] + ATP = O-phospho-L-seryl-[protein] + ADP + H(+). It carries out the reaction L-threonyl-[protein] + ATP = O-phospho-L-threonyl-[protein] + ADP + H(+). May be involved in the remodeling of cytoskeletal components, such as alpha-tubulin, and in this way regulates neurite branching and elongation, as well as cell motility. The polypeptide is Serine/threonine-protein kinase ULK4 (ULK4) (Homo sapiens (Human)).